The chain runs to 83 residues: Small ribosomal subunit protein bS16 (83 aa).

The protein belongs to the bacterial ribosomal protein bS16 family.

This Acinetobacter baumannii (strain AB307-0294) protein is Small ribosomal subunit protein bS16.